We begin with the raw amino-acid sequence, 3387 residues long: Genome polyprotein (3387 aa).

The Cytoplasmic portion of the chain corresponds to 1 to 100 (MNQRKKVVRP…LNILNGRKRS (100 aa)). The interval 36-71 (LFSGKGPLRMVLAFITFLRVLSIPPTAGILKRWGQL) is hydrophobic; homodimerization of capsid protein C. The propeptide at 100-113 (STMTLLCLIPTAMA) is ER anchor for the capsid protein C, removed in mature form by serine protease NS3. A helical transmembrane segment spans residues 101–117 (TMTLLCLIPTAMAFHLS). Residues 118–237 (TRDGEPLMIV…GAWKHAQRVE (120 aa)) are Extracellular-facing. A glycan (N-linked (GlcNAc...) asparagine; by host) is linked at N182. The chain crosses the membrane as a helical span at residues 238–258 (SWILRNPGFALLAGFMAYMIG). Over 259–265 (QTGIQRT) the chain is Cytoplasmic. The chain crosses the membrane as a helical span at residues 266 to 279 (VFFVLMMLVAPSYG). At 280–723 (MRCVGVGNRD…AVHQVFGSVY (444 aa)) the chain is on the extracellular side. Disulfide bonds link C282–C309, C339–C400, C353–C384, C371–C395, C464–C564, and C581–C612. N-linked (GlcNAc...) asparagine; by host glycosylation occurs at N346. The tract at residues 377-390 (DRGWGNGCGLFGKG) is fusion peptide. The chain crosses the membrane as a helical span at residues 724–746 (TTMFGGVSWMVRILIGFLVLWIG). At 747–750 (TNSR) the chain is on the cytoplasmic side. Residues 751-771 (NTSMAMTCIAVGGITLFLGFT) traverse the membrane as a helical segment. At 772-1194 (VHADTGCAVS…MLGDTMSGRM (423 aa)) the chain is on the extracellular side. 6 cysteine pairs are disulfide-bonded: C778–C789, C829–C917, C953–C997, C1054–C1103, C1065–C1087, and C1086–C1090. N-linked (GlcNAc...) asparagine; by host glycosylation is found at N904 and N981. The chain crosses the membrane as a helical span at residues 1195-1218 (GGQIHLAIMAVFKMSPGYVLGIFL). The Lumenal portion of the chain corresponds to 1219–1224 (RKLTSR). The helical transmembrane segment at 1225-1243 (ETALMVIGMAMTTVLSIPH) threads the bilayer. Over 1244 to 1267 (DLMEFIDGISLGLILLKMVTHFDN) the chain is Cytoplasmic. A helical transmembrane segment spans residues 1268–1288 (TQVGTLALSLTFIRSTMPLVM). A1289 is a topological domain (lumenal). Residues 1290–1308 (WRTIMAVLFVVTLIPLCRT) traverse the membrane as a helical segment. At 1309–1316 (SCLQKQSH) the chain is on the lumenal side. The chain crosses the membrane as a helical span at residues 1317 to 1337 (WVEITALILGAQALPVYLMTL). The Cytoplasmic segment spans residues 1338–1345 (MKGASKRS). The helical transmembrane segment at 1346–1366 (WPLNEGIMAVGLVSLLGSALL) threads the bilayer. Residues 1367-1369 (KND) lie on the Lumenal side of the membrane. Residues 1370 to 1390 (VPLAGPMVAGGLLLAAYVMSG) traverse the membrane as a helical segment. Over 1391-1437 (SSADLSLEKAANVQWDEMADITGSSPIIEVKQDEDGSFSIRDIEETN) the chain is Cytoplasmic. An interacts with and activates NS3 protease region spans residues 1397 to 1436 (LEKAANVQWDEMADITGSSPIIEVKQDEDGSFSIRDIEET). The segment at residues 1438-1458 (MITLLVKLALITVSGLYPLAI) is an intramembrane region (helical). The Cytoplasmic portion of the chain corresponds to 1459–2146 (PVTMTLWYMW…LNELPESLET (688 aa)). The Peptidase S7 domain occupies 1475–1652 (SGALWDVPSP…ERTGEPDYEV (178 aa)). Residues H1525, D1549, and S1609 each act as charge relay system; for serine protease NS3 activity in the active site. The region spanning 1654-1810 (EDIFRKKRLT…QSNSPIEDIE (157 aa)) is the Helicase ATP-binding domain. An important for RNA-binding region spans residues 1658-1661 (RKKR). Position 1667–1674 (1667–1674 (LHPGAGKT)) interacts with ATP. The DEAH box signature appears at 1758–1761 (DEAH). The 168-residue stretch at 1820–1987 (TGFDWITDYQ…IIPTLFGPER (168 aa)) folds into the Helicase C-terminal domain. K1862 bears the N6-acetyllysine; by host mark. A helical membrane pass occupies residues 2147–2167 (LMLVALLGAMTAGIFLFFMQG). Residues 2168 to 2169 (KG) are Lumenal-facing. Residues 2170–2190 (IGKLSMGLIAIAVASGLLWVA) constitute an intramembrane region (helical). Residue E2191 is a topological domain, lumenal. The helical transmembrane segment at 2192 to 2212 (IQPQWIAASIILEFFLMVLLI) threads the bilayer. At 2213–2225 (PEPEKQRTPQDNQ) the chain is on the cytoplasmic side. Residues 2226–2246 (LIYVILTILTIIGLIAANEMG) form a helical membrane-spanning segment. Residues 2247–2270 (LIEKTKTDFGFYQVKTETTILDVD) are Lumenal-facing. The helical intramembrane region spans 2271-2291 (LRPASAWTLYAVATTILTPML). The Lumenal portion of the chain corresponds to 2292-2301 (RHTIENTSAN). 2 N-linked (GlcNAc...) asparagine; by host glycosylation sites follow: N2297 and N2301. Residues 2302–2322 (LSLAAIANQAAVLMGLGKGWP) constitute an intramembrane region (helical). Residues 2323 to 2343 (LHRMDLGVPLLAMGCYSQVNP) lie on the Lumenal side of the membrane. Residues 2344-2364 (TTLIASLVMLLVHYAIIGPGL) traverse the membrane as a helical segment. Residues 2365-2409 (QAKATREAQKRTAAGIMKNPTVDGITVIDLEPISYDPKFEKQLGQ) are Cytoplasmic-facing. The chain crosses the membrane as a helical span at residues 2410-2430 (VMLLVLCAGQLLLMRTTWAFC). Topologically, residues 2431–2455 (EVLTLATGPVLTLWEGNPGRFWNTT) are lumenal. Residue N2453 is glycosylated (N-linked (GlcNAc...) asparagine; by host). The helical transmembrane segment at 2456–2476 (IAVSTANIFRGSYLAGAGLAF) threads the bilayer. The Cytoplasmic segment spans residues 2477-3387 (SLIKNAQTPR…SAPFESEGVL (911 aa)). An mRNA cap 0-1 NS5-type MT domain is found at 2489 to 2751 (TGTTGETLGE…DVDLGAGTRS (263 aa)). An S-adenosyl-L-methionine-binding site is contributed by S2543. A Phosphoserine modification is found at S2543. Residue K2548 is the For 2'-O-MTase activity of the active site. The SUMO-interacting motif motif lies at 2564–2567 (VVDL). S-adenosyl-L-methionine contacts are provided by G2573, W2574, T2591, K2592, D2618, and V2619. D2633 serves as the catalytic For 2'-O-MTase activity. I2634 serves as a coordination point for S-adenosyl-L-methionine. Active-site for 2'-O-MTase activity residues include K2668 and E2704. Position 2706 (Y2706) interacts with S-adenosyl-L-methionine. 4 residues coordinate Zn(2+): E2925, H2929, C2934, and C2937. The RdRp catalytic domain maps to 3016–3166 (LIYADDTAGW…PLDERFSTSL (151 aa)). Zn(2+) contacts are provided by H3200, C3216, and C3335.

In the N-terminal section; belongs to the class I-like SAM-binding methyltransferase superfamily. mRNA cap 0-1 NS5-type methyltransferase family. In terms of assembly, homodimer. Interacts (via N-terminus) with host EXOC1 (via C-terminus); this interaction results in EXOC1 degradation through the proteasome degradation pathway. As to quaternary structure, forms heterodimers with envelope protein E in the endoplasmic reticulum and Golgi. Homodimer; in the endoplasmic reticulum and Golgi. Interacts with protein prM. Interacts with non-structural protein 1. In terms of assembly, homodimer; Homohexamer when secreted. Interacts with envelope protein E. As to quaternary structure, interacts (via N-terminus) with serine protease NS3. Forms a heterodimer with serine protease NS3. May form homooligomers. In terms of assembly, forms a heterodimer with NS2B. Interacts with NS4B. Interacts with unphosphorylated RNA-directed RNA polymerase NS5; this interaction stimulates RNA-directed RNA polymerase NS5 guanylyltransferase activity. As to quaternary structure, interacts with host MAVS; this interaction inhibits the synthesis of IFN-beta. Interacts with host AUP1; the interaction occurs in the presence of Dengue virus NS4B and induces lipophagy which facilitates production of virus progeny particles. Interacts with serine protease NS3. In terms of assembly, homodimer. Interacts with host STAT2; this interaction inhibits the phosphorylation of the latter, and, when all viral proteins are present (polyprotein), targets STAT2 for degradation. Interacts with serine protease NS3. Interacts with host PAF1 complex; the interaction may prevent the recruitment of the PAF1 complex to interferon-responsive genes, and thus reduces the immune response. Post-translationally, specific enzymatic cleavages in vivo yield mature proteins. Cleavages in the lumen of endoplasmic reticulum are performed by host signal peptidase, whereas cleavages in the cytoplasmic side are performed by serine protease NS3. Signal cleavage at the 2K-4B site requires a prior NS3 protease-mediated cleavage at the 4A-2K site. Cleaved in post-Golgi vesicles by a host furin, releasing the mature small envelope protein M, and peptide pr. This cleavage is incomplete as up to 30% of viral particles still carry uncleaved prM. In terms of processing, N-glycosylated. Post-translationally, N-glycosylated. The excreted form is glycosylated and this is required for efficient secretion of the protein from infected cells. Acetylated by host KAT5. Acetylation modulates NS3 RNA-binding and unwinding activities and plays an important positive role for viral replication. In terms of processing, sumoylation of RNA-directed RNA polymerase NS5 increases NS5 protein stability allowing proper viral RNA replication. Post-translationally, phosphorylated on serines residues. This phosphorylation may trigger NS5 nuclear localization.

It is found in the virion. Its subcellular location is the host nucleus. The protein resides in the host cytoplasm. It localises to the host perinuclear region. The protein localises to the secreted. It is found in the virion membrane. Its subcellular location is the host endoplasmic reticulum membrane. The protein resides in the host mitochondrion. The catalysed reaction is Selective hydrolysis of -Xaa-Xaa-|-Yaa- bonds in which each of the Xaa can be either Arg or Lys and Yaa can be either Ser or Ala.. It carries out the reaction RNA(n) + a ribonucleoside 5'-triphosphate = RNA(n+1) + diphosphate. It catalyses the reaction a ribonucleoside 5'-triphosphate + H2O = a ribonucleoside 5'-diphosphate + phosphate + H(+). The enzyme catalyses ATP + H2O = ADP + phosphate + H(+). The catalysed reaction is a 5'-end (5'-triphosphoguanosine)-ribonucleoside in mRNA + S-adenosyl-L-methionine = a 5'-end (N(7)-methyl 5'-triphosphoguanosine)-ribonucleoside in mRNA + S-adenosyl-L-homocysteine. It carries out the reaction a 5'-end (N(7)-methyl 5'-triphosphoguanosine)-ribonucleoside in mRNA + S-adenosyl-L-methionine = a 5'-end (N(7)-methyl 5'-triphosphoguanosine)-(2'-O-methyl-ribonucleoside) in mRNA + S-adenosyl-L-homocysteine + H(+). Functionally, plays a role in virus budding by binding to the cell membrane and gathering the viral RNA into a nucleocapsid that forms the core of a mature virus particle. During virus entry, may induce genome penetration into the host cytoplasm after hemifusion induced by the surface proteins. Can migrate to the cell nucleus where it modulates host functions. Overcomes the anti-viral effects of host EXOC1 by sequestering and degrading the latter through the proteasome degradation pathway. In terms of biological role, inhibits RNA silencing by interfering with host Dicer. Its function is as follows. Prevents premature fusion activity of envelope proteins in trans-Golgi by binding to envelope protein E at pH6.0. After virion release in extracellular space, gets dissociated from E dimers. Acts as a chaperone for envelope protein E during intracellular virion assembly by masking and inactivating envelope protein E fusion peptide. prM is the only viral peptide matured by host furin in the trans-Golgi network probably to avoid catastrophic activation of the viral fusion activity in acidic Golgi compartment prior to virion release. prM-E cleavage is inefficient, and many virions are only partially matured. These uncleaved prM would play a role in immune evasion. Functionally, may play a role in virus budding. Exerts cytotoxic effects by activating a mitochondrial apoptotic pathway through M ectodomain. May display a viroporin activity. In terms of biological role, binds to host cell surface receptor and mediates fusion between viral and cellular membranes. Envelope protein is synthesized in the endoplasmic reticulum in the form of heterodimer with protein prM. They play a role in virion budding in the ER, and the newly formed immature particle is covered with 60 spikes composed of heterodimer between precursor prM and envelope protein E. The virion is transported to the Golgi apparatus where the low pH causes dissociation of PrM-E heterodimers and formation of E homodimers. prM-E cleavage is inefficient, and many virions are only partially matured. These uncleaved prM would play a role in immune evasion. Its function is as follows. Involved in immune evasion, pathogenesis and viral replication. Once cleaved off the polyprotein, is targeted to three destinations: the viral replication cycle, the plasma membrane and the extracellular compartment. Essential for viral replication. Required for formation of the replication complex and recruitment of other non-structural proteins to the ER-derived membrane structures. Excreted as a hexameric lipoparticle that plays a role against host immune response. Antagonizing the complement function. Binds to the host macrophages and dendritic cells. Inhibits signal transduction originating from Toll-like receptor 3 (TLR3). Disrupts the host endothelial glycocalyx layer of host pulmonary microvascular endothelial cells, inducing degradation of sialic acid and shedding of heparan sulfate proteoglycans. NS1 induces expression of sialidases, heparanase, and activates cathepsin L, which activates heparanase via enzymatic cleavage. These effects are probably linked to the endothelial hyperpermeability observed in severe dengue disease. Functionally, component of the viral RNA replication complex that functions in virion assembly and antagonizes the host immune response. In terms of biological role, required cofactor for the serine protease function of NS3. May have membrane-destabilizing activity and form viroporins. Its function is as follows. Displays three enzymatic activities: serine protease, NTPase and RNA helicase. NS3 serine protease, in association with NS2B, performs its autocleavage and cleaves the polyprotein at dibasic sites in the cytoplasm: C-prM, NS2A-NS2B, NS2B-NS3, NS3-NS4A, NS4A-2K and NS4B-NS5. NS3 RNA helicase binds RNA and unwinds dsRNA in the 3' to 5' direction. Regulates the ATPase activity of the NS3 helicase activity. NS4A allows NS3 helicase to conserve energy during unwinding. Plays a role in the inhibition of the host innate immune response. Interacts with host MAVS and thereby prevents the interaction between RIGI and MAVS. In turn, IFN-beta production is impaired. Interacts with host AUP1 which mediates induction of lipophagy in host cells and facilitates production of virus progeny particles. Functionally, functions as a signal peptide for NS4B and is required for the interferon antagonism activity of the latter. In terms of biological role, induces the formation of ER-derived membrane vesicles where the viral replication takes place. Inhibits interferon (IFN)-induced host STAT1 phosphorylation and nuclear translocation, thereby preventing the establishment of cellular antiviral state by blocking the IFN-alpha/beta pathway. Its function is as follows. Replicates the viral (+) and (-) RNA genome, and performs the capping of genomes in the cytoplasm. NS5 methylates viral RNA cap at guanine N-7 and ribose 2'-O positions. Besides its role in RNA genome replication, also prevents the establishment of cellular antiviral state by blocking the interferon-alpha/beta (IFN-alpha/beta) signaling pathway. Inhibits host TYK2 and STAT2 phosphorylation, thereby preventing activation of JAK-STAT signaling pathway. May reduce immune responses by preventing the recruitment of the host PAF1 complex to interferon-responsive genes. In Aedes aegypti (Yellowfever mosquito), this protein is Genome polyprotein.